We begin with the raw amino-acid sequence, 122 residues long: Large ribosomal subunit protein uL14c (122 aa).

The protein belongs to the universal ribosomal protein uL14 family. As to quaternary structure, part of the 50S ribosomal subunit.

The protein resides in the plastid. Its subcellular location is the chloroplast. Its function is as follows. Binds to 23S rRNA. The sequence is that of Large ribosomal subunit protein uL14c from Adiantum capillus-veneris (Maidenhair fern).